The chain runs to 101 residues: Urease subunit beta (101 aa).

The protein belongs to the urease beta subunit family. In terms of assembly, heterotrimer of UreA (gamma), UreB (beta) and UreC (alpha) subunits. Three heterotrimers associate to form the active enzyme.

Its subcellular location is the cytoplasm. It catalyses the reaction urea + 2 H2O + H(+) = hydrogencarbonate + 2 NH4(+). It participates in nitrogen metabolism; urea degradation; CO(2) and NH(3) from urea (urease route): step 1/1. This chain is Urease subunit beta, found in Rhizobium etli (strain CIAT 652).